The primary structure comprises 258 residues: Neurotrophin-3 (258 aa).

The first 18 residues, 1–18 (MSILFYVIFLAYLRGIQG), serve as a signal peptide directing secretion. Positions 19-139 (NSMDQRSLPE…ANRTSPRRKR (121 aa)) are excised as a propeptide. The tract at residues 60-85 (QSTLPKAEAPREPEQGEATRSEFQPM) is disordered. The span at 67–79 (EAPREPEQGEATR) shows a compositional bias: basic and acidic residues. An N-linked (GlcNAc...) asparagine glycan is attached at Asn-131. 3 disulfides stabilise this stretch: Cys-153–Cys-218, Cys-196–Cys-247, and Cys-206–Cys-249.

The protein belongs to the NGF-beta family. In terms of tissue distribution, brain and peripheral tissues.

The protein resides in the secreted. Functionally, seems to promote the survival of visceral and proprioceptive sensory neurons. This is Neurotrophin-3 (Ntf3) from Mus musculus (Mouse).